Consider the following 700-residue polypeptide: MARKTPIERYRNIGISAHIDAGKTTTTERILFYTGVNHKIGEVHDGAATMDWMEQEQERGITITSAATTCFWKGMDMSYPEHRFNIIDTPGHVDFTIEVERSMRVLDGACMVYCAVGGVQPQSETVWRQANKYKVPRLAFVNKMDRTGANFFKVYDQMRLRLKANPVPVVIPIGAEEGFKGVVDLLKMKAIIWDEASQGMKFNYEEIPADLAESAKEWREKMVEAAAEASEELMNKYLEEGDLSEEEIKLGLRTRTIATEIQPMLCGTAFKNKGVQRMLDAVIDYLPSPVDIPPVAGTDEDEAETTRKADDNEKFSALAFKLMTDPFVGQLTFVRVYSGVLSKGDSVYNPVKGKKERIGRIVQMHANERLEVEEIRAGDIAACVGLKDVTTGETLCDPEAIVTLERMVFPEPVIAQAVEPKTKTDQEKMGIALQRLAAEDPSFRVKTDEESGQTIISGMGELHLEIIVDRMKREFGVEANVGKPQVAYRETIRKTVEEAEGKFVRQSGGKGQYGHVVLKIEPNEAGKGIEFVDAIKGGVVPREFIPAVEKGINEAVTQGVLAGYPVVDVKVTLHFGSYHDVDSNELAFKMAAIFGFKEGCKKAGPVILEPMMAVEVETPEDYAGTVMGDLSSRRGMVQGMDDMVGGGKAIKAEVPLSEMFGYSTALRSATQGRATYTMEFKHYSEAPRNVSEAIMAARAK.

A tr-type G domain is found at E8–V290. GTP is bound by residues A17–T24, D88–H92, and N142–D145.

It belongs to the TRAFAC class translation factor GTPase superfamily. Classic translation factor GTPase family. EF-G/EF-2 subfamily.

Its subcellular location is the cytoplasm. Its function is as follows. Catalyzes the GTP-dependent ribosomal translocation step during translation elongation. During this step, the ribosome changes from the pre-translocational (PRE) to the post-translocational (POST) state as the newly formed A-site-bound peptidyl-tRNA and P-site-bound deacylated tRNA move to the P and E sites, respectively. Catalyzes the coordinated movement of the two tRNA molecules, the mRNA and conformational changes in the ribosome. The chain is Elongation factor G from Paracidovorax citrulli (strain AAC00-1) (Acidovorax citrulli).